Reading from the N-terminus, the 533-residue chain is Peptide chain release factor 3 (533 aa).

Positions 10 to 278 constitute a tr-type G domain; it reads EKRRTFAIIS…TFVEIAPPPQ (269 aa). Residues 19–26, 87–91, and 141–144 each bind GTP; these read SHPDAGKT, DTPGH, and NKMD.

It belongs to the TRAFAC class translation factor GTPase superfamily. Classic translation factor GTPase family. PrfC subfamily.

It localises to the cytoplasm. In terms of biological role, increases the formation of ribosomal termination complexes and stimulates activities of RF-1 and RF-2. It binds guanine nucleotides and has strong preference for UGA stop codons. It may interact directly with the ribosome. The stimulation of RF-1 and RF-2 is significantly reduced by GTP and GDP, but not by GMP. The polypeptide is Peptide chain release factor 3 (Salinibacter ruber (strain DSM 13855 / M31)).